We begin with the raw amino-acid sequence, 483 residues long: Protein nucleotidyltransferase YdiU (483 aa).

Gly-100, Gly-102, Arg-103, Lys-123, Asp-135, Gly-136, Arg-189, and Arg-196 together coordinate ATP. Catalysis depends on Asp-265, which acts as the Proton acceptor. Residues Asn-266 and Asp-275 each contribute to the Mg(2+) site. Asp-275 contacts ATP.

It belongs to the SELO family. Requires Mg(2+) as cofactor. The cofactor is Mn(2+).

The catalysed reaction is L-seryl-[protein] + ATP = 3-O-(5'-adenylyl)-L-seryl-[protein] + diphosphate. It carries out the reaction L-threonyl-[protein] + ATP = 3-O-(5'-adenylyl)-L-threonyl-[protein] + diphosphate. The enzyme catalyses L-tyrosyl-[protein] + ATP = O-(5'-adenylyl)-L-tyrosyl-[protein] + diphosphate. It catalyses the reaction L-histidyl-[protein] + UTP = N(tele)-(5'-uridylyl)-L-histidyl-[protein] + diphosphate. The catalysed reaction is L-seryl-[protein] + UTP = O-(5'-uridylyl)-L-seryl-[protein] + diphosphate. It carries out the reaction L-tyrosyl-[protein] + UTP = O-(5'-uridylyl)-L-tyrosyl-[protein] + diphosphate. Its function is as follows. Nucleotidyltransferase involved in the post-translational modification of proteins. It can catalyze the addition of adenosine monophosphate (AMP) or uridine monophosphate (UMP) to a protein, resulting in modifications known as AMPylation and UMPylation. The sequence is that of Protein nucleotidyltransferase YdiU from Gloeobacter violaceus (strain ATCC 29082 / PCC 7421).